An 850-amino-acid chain; its full sequence is Mitogen-activated protein kinase kinase kinase 11 (850 aa).

Serine 11 carries the phosphoserine modification. Positions 18–31 (GSGSGGGGGSGGVR) are enriched in gly residues. The disordered stretch occupies residues 18–37 (GSGSGGGGGSGGVRPEGSPK). Serine 35 is modified (phosphoserine). The region spanning 42-106 (YANPVWTALF…PSNYVSRGGG (65 aa)) is the SH3 domain. In terms of domain architecture, Protein kinase spans 118-380 (LRLEEVIGIG…ASILQQLEAL (263 aa)). Residues 124–132 (IGIGGFGKV) and lysine 145 each bind ATP. Residue aspartate 242 is the Proton acceptor of the active site. Threonine 278 is subject to Phosphothreonine; by autocatalysis. Residue serine 282 is modified to Phosphoserine; by autocatalysis and MAP4K1. A Phosphoserine modification is found at serine 395. Leucine-zipper stretches follow at residues 404 to 425 (IQGLFDELRAKEKELLSREEEL) and 439 to 460 (LRRREHLLAQWELEVFERELTL). 5 positions are modified to phosphoserine: serine 508, serine 525, serine 549, serine 556, and serine 557. The interval 536 to 850 (LEPAESGQTW…QAPWAPEAGP (315 aa)) is disordered. Residues 551-563 (RRLDDSSNGERRA) show a composition bias toward basic and acidic residues. The segment covering 598–610 (SSPLGSPSTPPAL) has biased composition (low complexity). Serine 655 carries the post-translational modification Phosphoserine. A compositionally biased stretch (pro residues) spans 677–693 (TAPPPAQMASPCPPDLP). Position 712 is a phosphothreonine (threonine 712). A phosphoserine mark is found at serine 728, serine 731, serine 743, serine 751, serine 761, serine 773, serine 792, serine 796, and serine 818. The span at 790-802 (RPSPLPSPQPAPR) shows a compositional bias: pro residues. Residues 803-819 (RAPWTLFPDSDPFWDSP) are compositionally biased toward low complexity.

This sequence belongs to the protein kinase superfamily. STE Ser/Thr protein kinase family. MAP kinase kinase kinase subfamily. Homodimer; undergoes dimerization during activation. Interacts with MAP2K4/MKK4. Interacts with MAP2K7/MKK7. Found in a complex with SH3RF1, RAC1, MAP2K7/MKK7, MAPK8IP1/JIP1 and MAPK8/JNK1. Requires Mg(2+) as cofactor. Autophosphorylation on serine and threonine residues within the activation loop plays a role in enzyme activation. Thr-278 is likely to be the main autophosphorylation site. Phosphorylation of Ser-556 and Ser-557 is induced by CDC42.

It localises to the cytoplasm. It is found in the cytoskeleton. The protein localises to the microtubule organizing center. The protein resides in the centrosome. The enzyme catalyses L-seryl-[protein] + ATP = O-phospho-L-seryl-[protein] + ADP + H(+). It carries out the reaction L-threonyl-[protein] + ATP = O-phospho-L-threonyl-[protein] + ADP + H(+). Its activity is regulated as follows. Homodimerization via the leucine zipper domains is required for autophosphorylation and subsequent activation. Its function is as follows. Activates the JUN N-terminal pathway. Required for serum-stimulated cell proliferation and for mitogen and cytokine activation of MAPK14 (p38), MAPK3 (ERK) and MAPK8 (JNK1) through phosphorylation and activation of MAP2K4/MKK4 and MAP2K7/MKK7. Plays a role in mitogen-stimulated phosphorylation and activation of BRAF, but does not phosphorylate BRAF directly. Influences microtubule organization during the cell cycle. The protein is Mitogen-activated protein kinase kinase kinase 11 (Map3k11) of Rattus norvegicus (Rat).